The chain runs to 204 residues: Allurin (204 aa).

An N-terminal signal peptide occupies residues 1-19 (MDTFNFIICISALFHSTYG). The region spanning 36–138 (VDLHNLLRRS…DKMIGHYTQV (103 aa)) is the SCP domain. The chain crosses the membrane as a helical span at residues 140-161 (WAKTYLLGCGLAFCPGNYYPYV).

It belongs to the CRISP family. Expressed only in oviduct.

The protein resides in the membrane. The protein localises to the secreted. Functionally, involved in sperm chemoattraction. This Xenopus tropicalis (Western clawed frog) protein is Allurin (crisp-a).